Reading from the N-terminus, the 287-residue chain is Bifunctional protein FolD (287 aa).

NADP(+) contacts are provided by residues 165–167 (GRS), Ser-190, and Ile-231.

It belongs to the tetrahydrofolate dehydrogenase/cyclohydrolase family. As to quaternary structure, homodimer.

It carries out the reaction (6R)-5,10-methylene-5,6,7,8-tetrahydrofolate + NADP(+) = (6R)-5,10-methenyltetrahydrofolate + NADPH. The catalysed reaction is (6R)-5,10-methenyltetrahydrofolate + H2O = (6R)-10-formyltetrahydrofolate + H(+). Its pathway is one-carbon metabolism; tetrahydrofolate interconversion. In terms of biological role, catalyzes the oxidation of 5,10-methylenetetrahydrofolate to 5,10-methenyltetrahydrofolate and then the hydrolysis of 5,10-methenyltetrahydrofolate to 10-formyltetrahydrofolate. The protein is Bifunctional protein FolD of Carboxydothermus hydrogenoformans (strain ATCC BAA-161 / DSM 6008 / Z-2901).